Consider the following 604-residue polypeptide: UvrABC system protein C (604 aa).

Residues 14-91 enclose the GIY-YIG domain; that stretch reads ESPGVYRMLD…IKEQRPPYNI (78 aa). Residues 202–237 form the UVR domain; the sequence is EQVTAQLTRDMETASQALDFEEAARLRDQIQQLRRL. Residues 538 to 557 are disordered; it reads GHRQQRDKQRRTSTLQDIPG.

It belongs to the UvrC family. In terms of assembly, interacts with UvrB in an incision complex.

The protein localises to the cytoplasm. The UvrABC repair system catalyzes the recognition and processing of DNA lesions. UvrC both incises the 5' and 3' sides of the lesion. The N-terminal half is responsible for the 3' incision and the C-terminal half is responsible for the 5' incision. The polypeptide is UvrABC system protein C (Chromohalobacter salexigens (strain ATCC BAA-138 / DSM 3043 / CIP 106854 / NCIMB 13768 / 1H11)).